The sequence spans 155 residues: Cell division protein SepF (155 aa).

Residues 16–35 (TEDEEEDVETVEESEDVEEE) show a composition bias toward acidic residues. The interval 16–44 (TEDEEEDVETVEESEDVEEEESKKPQFIQ) is disordered.

Belongs to the SepF family. As to quaternary structure, homodimer. Interacts with FtsZ.

It is found in the cytoplasm. Its function is as follows. Cell division protein that is part of the divisome complex and is recruited early to the Z-ring. Probably stimulates Z-ring formation, perhaps through the cross-linking of FtsZ protofilaments. Its function overlaps with FtsA. This chain is Cell division protein SepF, found in Acetivibrio thermocellus (strain ATCC 27405 / DSM 1237 / JCM 9322 / NBRC 103400 / NCIMB 10682 / NRRL B-4536 / VPI 7372) (Clostridium thermocellum).